The primary structure comprises 227 residues: PKHD-type hydroxylase GOX0559 (227 aa).

In terms of domain architecture, Fe2OG dioxygenase spans Arg-78–Ser-178. Residues His-96, Asp-98, and His-159 each contribute to the Fe cation site. Arg-169 is a binding site for 2-oxoglutarate.

Requires Fe(2+) as cofactor. The cofactor is L-ascorbate.

The protein is PKHD-type hydroxylase GOX0559 of Gluconobacter oxydans (strain 621H) (Gluconobacter suboxydans).